The chain runs to 176 residues: Large ribosomal subunit protein uL6 (176 aa).

This sequence belongs to the universal ribosomal protein uL6 family. As to quaternary structure, part of the 50S ribosomal subunit.

Functionally, this protein binds to the 23S rRNA, and is important in its secondary structure. It is located near the subunit interface in the base of the L7/L12 stalk, and near the tRNA binding site of the peptidyltransferase center. In Burkholderia ambifaria (strain MC40-6), this protein is Large ribosomal subunit protein uL6.